A 950-amino-acid polypeptide reads, in one-letter code: Protocadherin alpha-9 (950 aa).

The N-terminal stretch at 1-29 (MLYSSRGDPEGQPLLLSLLILAMWVVGSG) is a signal peptide. 6 consecutive Cadherin domains span residues 30 to 133 (QLHY…PPVF), 134 to 242 (PATQ…APVF), 243 to 350 (DRTL…APQL), 351 to 455 (TIKT…APAF), 456 to 565 (AQSE…APAL), and 588 to 678 (GVVV…APKS). At 30–697 (QLHYSVPEEA…GPEVTLVDVN (668 aa)) the chain is on the extracellular side. N-linked (GlcNAc...) asparagine glycans are attached at residues Asn254 and Asn265. Residue Asn548 is glycosylated (N-linked (GlcNAc...) asparagine). A helical membrane pass occupies residues 698–718 (VYLIIAICAVSSLLVLTLLLY). The Cytoplasmic portion of the chain corresponds to 719 to 950 (TVLRCSAMPT…GNSTTDNSDQ (232 aa)). A PXXP 1 repeat occupies 734–737 (PGKP). Positions 734-894 (PGKPTLVCSS…PDKFIIPGSP (161 aa)) are 5 X 4 AA repeats of P-X-X-P. 3 disordered regions span residues 770-808 (MAFS…DWRY), 827-856 (ILRA…EVSP), and 871-950 (YGPG…NSDQ). Positions 789–798 (PSASSDSTGK) are enriched in polar residues. PXXP repeat units lie at residues 799–802 (PRQP), 832–835 (PGGP), 873–876 (PGNP), and 891–894 (PGSP). Over residues 909-923 (DKSDFITFGKKEETK) the composition is skewed to basic and acidic residues.

It localises to the cell membrane. Potential calcium-dependent cell-adhesion protein. May be involved in the establishment and maintenance of specific neuronal connections in the brain. The sequence is that of Protocadherin alpha-9 (PCDHA9) from Homo sapiens (Human).